A 343-amino-acid polypeptide reads, in one-letter code: Probable potassium channel protein 2 (343 aa).

Over 1 to 7 the chain is Cytoplasmic; sequence METSKKL. A helical transmembrane segment spans residues 8–28; it reads VIVAVLSITLILTYAYLISII. Over 29–61 the chain is Extracellular; the sequence is EGVDYFTALYFSVITITTTGYGDFTPKTFLGRT. The short motif at 46–51 is the Selectivity filter element; it reads TTGYGD. Residues 62–82 form a helical membrane-spanning segment; sequence LTVVYLCVGVGIVMYLFSLIA. Over 83-343 the chain is Cytoplasmic; that stretch reads EFIVEGKFEE…NLVKKKKKKL (261 aa). One can recognise an RCK N-terminal domain in the interval 107 to 227; the sequence is KDHYIICGYG…KIAGANRVVS (121 aa). The 86-residue stretch at 253-338 folds into the RCK C-terminal domain; sequence IKIAKDEYEE…LKYLENLVKK (86 aa).

Its subcellular location is the cell membrane. Probable potassium channel protein. The protein is Probable potassium channel protein 2 of Methanocaldococcus jannaschii (strain ATCC 43067 / DSM 2661 / JAL-1 / JCM 10045 / NBRC 100440) (Methanococcus jannaschii).